The sequence spans 39 residues: Cytochrome b6-f complex subunit 5 (39 aa).

The chain crosses the membrane as a helical span at residues 5–25; that stretch reads LLCGIVLGLVPITLLGLFVSA.

The protein belongs to the PetG family. As to quaternary structure, the 4 large subunits of the cytochrome b6-f complex are cytochrome b6, subunit IV (17 kDa polypeptide, PetD), cytochrome f and the Rieske protein, while the 4 small subunits are PetG, PetL, PetM and PetN. The complex functions as a dimer.

Its subcellular location is the cellular thylakoid membrane. Component of the cytochrome b6-f complex, which mediates electron transfer between photosystem II (PSII) and photosystem I (PSI), cyclic electron flow around PSI, and state transitions. PetG is required for either the stability or assembly of the cytochrome b6-f complex. This Prochlorococcus marinus (strain MIT 9301) protein is Cytochrome b6-f complex subunit 5.